The chain runs to 142 residues: uncharacterized protein (142 aa).

The tract at residues 1-31 (MSLPKKKKPEVEEEEKPEEEEEKEEEQEIDI) is disordered. The span at 11-29 (VEEEEKPEEEEEKEEEQEI) shows a compositional bias: acidic residues.

This is an uncharacterized protein from Acidianus sp. F28 (AFV-2).